We begin with the raw amino-acid sequence, 415 residues long: Lipoyl synthase, apicoplast (415 aa).

The signal sequence occupies residues 1-23 (MHFGIPSLFYLYILFSIIMRIKC). Cys153, Cys158, Cys164, Cys179, Cys183, Cys186, and Ser394 together coordinate [4Fe-4S] cluster. Residues 165 to 383 (WNIGTATIML…KEEGLKMGFK (219 aa)) form the Radical SAM core domain.

The protein belongs to the radical SAM superfamily. Lipoyl synthase family. The cofactor is [4Fe-4S] cluster.

It localises to the plastid. Its subcellular location is the apicoplast. The catalysed reaction is [[Fe-S] cluster scaffold protein carrying a second [4Fe-4S](2+) cluster] + N(6)-octanoyl-L-lysyl-[protein] + 2 oxidized [2Fe-2S]-[ferredoxin] + 2 S-adenosyl-L-methionine + 4 H(+) = [[Fe-S] cluster scaffold protein] + N(6)-[(R)-dihydrolipoyl]-L-lysyl-[protein] + 4 Fe(3+) + 2 hydrogen sulfide + 2 5'-deoxyadenosine + 2 L-methionine + 2 reduced [2Fe-2S]-[ferredoxin]. Its pathway is protein modification; protein lipoylation via endogenous pathway; protein N(6)-(lipoyl)lysine from octanoyl-[acyl-carrier-protein]: step 2/2. Catalyzes the radical-mediated insertion of two sulfur atoms into the C-6 and C-8 positions of the octanoyl moiety bound to the lipoyl domains of lipoate-dependent enzymes, thereby converting the octanoylated domains into lipoylated derivatives. The protein is Lipoyl synthase, apicoplast of Plasmodium falciparum (isolate 3D7).